Consider the following 96-residue polypeptide: Neurotoxin 23 (96 aa).

An N-terminal signal peptide occupies residues 1 to 22; the sequence is MKNIVIIITVAVLFNLFGESLQ. The LCN-type CS-alpha/beta domain occupies 26 to 89; the sequence is FETYPLNQDD…FLAEIIDTCN (64 aa). Disulfide bonds link cysteine 40–cysteine 63, cysteine 49–cysteine 68, and cysteine 53–cysteine 70.

This sequence belongs to the long (3 C-C) scorpion toxin superfamily. As to expression, expressed by the venom gland.

Its subcellular location is the secreted. The protein is Neurotoxin 23 of Lychas mucronatus (Chinese swimming scorpion).